We begin with the raw amino-acid sequence, 436 residues long: GTPase Der (436 aa).

EngA-type G domains follow at residues 4–167 (PVVA…KNIP) and 176–351 (VQFC…ENHS). GTP-binding positions include 10–17 (GRPNVGKS), 57–61 (DTGGI), 119–122 (NKLD), 182–189 (GRPNVGKS), 229–233 (DTAGM), and 294–297 (NKWD). The region spanning 352-436 (LRVQTNVLND…PIKIFARARK (85 aa)) is the KH-like domain.

This sequence belongs to the TRAFAC class TrmE-Era-EngA-EngB-Septin-like GTPase superfamily. EngA (Der) GTPase family. Associates with the 50S ribosomal subunit.

Functionally, GTPase that plays an essential role in the late steps of ribosome biogenesis. This Bacillus velezensis (strain DSM 23117 / BGSC 10A6 / LMG 26770 / FZB42) (Bacillus amyloliquefaciens subsp. plantarum) protein is GTPase Der.